Consider the following 568-residue polypeptide: MANSPHGGVLKDLLAGDAPRHDELAAEAETLPAIVLSERQLCDLELIMNGGFSPLEGFMTQKDFDGVCENCRLADGHLFSMPITLDASQQVISDSNLKPGSRVTLRDFRDDRNLAILTIEEKEAKLVFGGDPEHPAIKYFNTKVEDFYIGGKIEAVNKLNHYDYVALRYSPAELRVHFDKLGWTRVVAFQTRNPMHRAHRELTVRAARARQANVLIHPVVGLTKPGDIDHFTRVRAYQALLPRYPNGMAVLGLLPLAMRMGGPREAIWHAIIRKNHGATHFIVGRDHAGPGKNSKGEEFYGPYDAQHAVEKYREELGIEVVEFQQVTYLPDTDEYKPKDEVPAGIKTLDISGTELRNRLRTGAHIPEWFSYPEVVKILLRESSPPRATQGFTIFLTGYMNSGKDAIARALQVTLNQQGGRSVTLLLGDTVRHELSSELGFSAEDRHTNVQRIAFVAGELTRAGAAVIAAPIAPYERSRKAAREAVSGLGGSFFLVHVNTPLEYCEKTDKRGIYAKARRGEIKGFTGVDDPYEAPENADLVVDVSKQSVRSIVHEIILMLESEGYFDRL.

The segment at 1-162 (MANSPHGGVL…IEAVNKLNHY (162 aa)) is N-terminal. The interval 163 to 388 (DYVALRYSPA…LRESSPPRAT (226 aa)) is catalytic. Residue glutamine 190 participates in sulfate binding. ATP is bound by residues 190–193 (QTRN) and 284–287 (GRDH). Residues threonine 191, arginine 192, and asparagine 193 contribute to the active site. Arginine 192 is a sulfate binding site. Residue alanine 288 participates in sulfate binding. Valine 326 contacts ATP. Residues 389–568 (QGFTIFLTGY…LESEGYFDRL (180 aa)) are allosteric regulation domain; adenylyl-sulfate kinase-like. 3'-phosphoadenylyl sulfate contacts are provided by residues 428-431 (DTVR), arginine 445, 471-472 (IA), and arginine 510.

In the N-terminal section; belongs to the sulfate adenylyltransferase family. This sequence in the C-terminal section; belongs to the APS kinase family. In terms of assembly, homohexamer. Dimer of trimers.

It is found in the cytoplasm. It catalyses the reaction sulfate + ATP + H(+) = adenosine 5'-phosphosulfate + diphosphate. The protein operates within sulfur metabolism; hydrogen sulfide biosynthesis; sulfite from sulfate: step 1/3. Allosterically inhibited by 3'-phosphoadenosine 5'-phosphosulfate (PAPS). Functionally, catalyzes the first intracellular reaction of sulfate assimilation, forming adenosine-5'-phosphosulfate (APS) from inorganic sulfate and ATP. Plays an important role in sulfate activation as a component of the biosynthesis pathway of sulfur-containing amino acids. The sequence is that of Sulfate adenylyltransferase from Aspergillus terreus.